The following is a 71-amino-acid chain: NAD(P)H-quinone oxidoreductase subunit O (71 aa).

Belongs to the complex I NdhO subunit family. As to quaternary structure, NDH-1 can be composed of about 15 different subunits; different subcomplexes with different compositions have been identified which probably have different functions.

It is found in the cellular thylakoid membrane. The enzyme catalyses a plastoquinone + NADH + (n+1) H(+)(in) = a plastoquinol + NAD(+) + n H(+)(out). It catalyses the reaction a plastoquinone + NADPH + (n+1) H(+)(in) = a plastoquinol + NADP(+) + n H(+)(out). Functionally, NDH-1 shuttles electrons from an unknown electron donor, via FMN and iron-sulfur (Fe-S) centers, to quinones in the respiratory and/or the photosynthetic chain. The immediate electron acceptor for the enzyme in this species is believed to be plastoquinone. Couples the redox reaction to proton translocation, and thus conserves the redox energy in a proton gradient. Cyanobacterial NDH-1 also plays a role in inorganic carbon-concentration. The protein is NAD(P)H-quinone oxidoreductase subunit O of Picosynechococcus sp. (strain ATCC 27264 / PCC 7002 / PR-6) (Agmenellum quadruplicatum).